Reading from the N-terminus, the 221-residue chain is Urease accessory protein UreF (221 aa).

The protein belongs to the UreF family. In terms of assembly, ureD, UreF and UreG form a complex that acts as a GTP-hydrolysis-dependent molecular chaperone, activating the urease apoprotein by helping to assemble the nickel containing metallocenter of UreC. The UreE protein probably delivers the nickel.

The protein localises to the cytoplasm. Required for maturation of urease via the functional incorporation of the urease nickel metallocenter. The sequence is that of Urease accessory protein UreF from Aliivibrio fischeri (strain MJ11) (Vibrio fischeri).